A 281-amino-acid polypeptide reads, in one-letter code: Pantothenate synthetase (281 aa).

30 to 37 is an ATP binding site; that stretch reads MGNLHQGH. H37 serves as the catalytic Proton donor. Q61 contributes to the (R)-pantoate binding site. Q61 serves as a coordination point for beta-alanine. 149 to 152 provides a ligand contact to ATP; it reads GNKD. Q155 contributes to the (R)-pantoate binding site. Residues I178 and 186–189 each bind ATP; that span reads MSSR.

This sequence belongs to the pantothenate synthetase family. In terms of assembly, homodimer.

It is found in the cytoplasm. It carries out the reaction (R)-pantoate + beta-alanine + ATP = (R)-pantothenate + AMP + diphosphate + H(+). Its pathway is cofactor biosynthesis; (R)-pantothenate biosynthesis; (R)-pantothenate from (R)-pantoate and beta-alanine: step 1/1. In terms of biological role, catalyzes the condensation of pantoate with beta-alanine in an ATP-dependent reaction via a pantoyl-adenylate intermediate. In Shewanella baltica (strain OS155 / ATCC BAA-1091), this protein is Pantothenate synthetase.